A 383-amino-acid polypeptide reads, in one-letter code: tRNA(Met) cytidine acetate ligase (383 aa).

ATP is bound by residues 7–20 (ISEYNPFHNGHLYQ), Gly102, Asn160, and 181–182 (RI).

It belongs to the TmcAL family.

It localises to the cytoplasm. It carries out the reaction cytidine(34) in elongator tRNA(Met) + acetate + ATP = N(4)-acetylcytidine(34) in elongator tRNA(Met) + AMP + diphosphate. Functionally, catalyzes the formation of N(4)-acetylcytidine (ac(4)C) at the wobble position of elongator tRNA(Met), using acetate and ATP as substrates. First activates an acetate ion to form acetyladenylate (Ac-AMP) and then transfers the acetyl group to tRNA to form ac(4)C34. The protein is tRNA(Met) cytidine acetate ligase of Exiguobacterium sibiricum (strain DSM 17290 / CCUG 55495 / CIP 109462 / JCM 13490 / 255-15).